The primary structure comprises 245 residues: rRNA adenine N-6-methyltransferase (245 aa).

The S-adenosyl-L-methionine site is built by Asn10, Leu12, Gly37, Glu58, Asp83, and Ser100.

This sequence belongs to the class I-like SAM-binding methyltransferase superfamily. rRNA adenine N(6)-methyltransferase family.

The catalysed reaction is adenosine(2085) in 23S rRNA + 2 S-adenosyl-L-methionine = N(6)-dimethyladenosine(2085) in 23S rRNA + 2 S-adenosyl-L-homocysteine + 2 H(+). Functionally, this protein produces a dimethylation of the adenine residue at position 2085 in 23S rRNA, resulting in reduced affinity between ribosomes and macrolide-lincosamide-streptogramin B antibiotics. The protein is rRNA adenine N-6-methyltransferase (ermBP) of Clostridium perfringens.